Consider the following 273-residue polypeptide: Terpene cyclase ascF (273 aa).

Transmembrane regions (helical) follow at residues 18–38 (VYEATFQFGGVAWTLCYILIA), 49–69 (MPLFALANNFAWEMVYALWVV), 78–98 (MTIWMLIDTPIIYSILKHGVL), 113–133 (ILVGLIALCAAAHWSWQSWWI), 153–173 (YWAVSMCQFLVSTMSLAMLCV), 178–198 (GGVSWMIWLSRFLGTLIGLNM), and 217–237 (APAVFVWGVTTVCDIIYGFVL).

This sequence belongs to the paxB family.

It is found in the membrane. It carries out the reaction ilicicolin A epoxide = ilicicolin C. Its pathway is secondary metabolite biosynthesis; terpenoid biosynthesis. Terpene cyclase; part of the asc-1 gene cluster that mediates the biosynthesis of both ascochlorin and ascofuranone, a strong inhibitor of cyanide-insensitive alternative oxidases and a promising drug candidate against African trypanosomiasis. The first step in the pathway is performed by the non-reducing polyketide synthase ascC that produces orsellinic acid by condensing acetyl-CoA with 3 malonyl-CoA units. Orsellinic acid is then prenylated by the prenyltransferase ascA to yield ilicicolinic acid B. Ilicicolinic acid B is further reduced to ilicicolin B by the reductase ascB. The halogenase ascD then chlorinates ilicicolin B to produce ilicicolin A which is converted to ilicicolin A epoxide by the cytochrome P450 monooxygenase ascE that catalyzes stereoselective epoxidation of the terminal double bond of the prenyl group. Ilicicolin A epoxide is the last common precursor for the biosynthesis of ascofuranone and ascochlorin. The terpene cyclase ascF produces a monocyclic terpene, and the cyclization reaction is proposed to be initiated by protonation of the terminal epoxide of ilicicolin A epoxide to generate a monocyclic tertiarycation, which is followed by a series of hydride and methyl shifts with abstraction of proton, leading to the formation of the (14S,15R,19R)-trimethylcyclohexanone ring structure of ilicicolin C, which is finally reduced to ascochlorin by the dehydrogenase ascG. On the other hand, ilicicolin A epoxide is hydroxylated by the cytochrome P450 monooxygenase ascH, and the resultant product is cyclized by the terpene cyclase ascI to ascofuranol via protonation-initiated epoxide ring opening, which facilitates the 6-endo-tet cyclization to form the tetrahy-drofuran ring. Finally, ascofuranol is oxidized into ascofuranone by ascJ. The sequence is that of Terpene cyclase ascF from Acremonium egyptiacum (Oospora egyptiaca).